Here is a 326-residue protein sequence, read N- to C-terminus: Protein BCCIP homolog (326 aa).

Residues 37-81 form a disordered region; the sequence is SHPEDCQCSDEDISFDEKQKIPNLPRKGKEEQVSDSSDEEDSQED. Serine 45 bears the Phosphoserine mark. Residues 72–81 show a composition bias toward acidic residues; that stretch reads SSDEEDSQED.

It belongs to the BCP1 family.

The sequence is that of Protein BCCIP homolog from Arabidopsis thaliana (Mouse-ear cress).